Reading from the N-terminus, the 907-residue chain is Protein translocase subunit SecA (907 aa).

ATP-binding positions include Q87, 105–109 (GEGKT), and D512. Positions 891, 893, 902, and 903 each coordinate Zn(2+).

It belongs to the SecA family. As to quaternary structure, monomer and homodimer. Part of the essential Sec protein translocation apparatus which comprises SecA, SecYEG and auxiliary proteins SecDF-YajC and YidC. The cofactor is Zn(2+).

Its subcellular location is the cell inner membrane. It localises to the cytoplasm. It catalyses the reaction ATP + H2O + cellular proteinSide 1 = ADP + phosphate + cellular proteinSide 2.. Part of the Sec protein translocase complex. Interacts with the SecYEG preprotein conducting channel. Has a central role in coupling the hydrolysis of ATP to the transfer of proteins into and across the cell membrane, serving both as a receptor for the preprotein-SecB complex and as an ATP-driven molecular motor driving the stepwise translocation of polypeptide chains across the membrane. The polypeptide is Protein translocase subunit SecA (Shewanella loihica (strain ATCC BAA-1088 / PV-4)).